The sequence spans 185 residues: MKDPILKEAELRMKKSVEAIDEELKKLRTGRPSPALLEEIKIDYYGVPTPINQVATINVTEERSLIIKPWEKNLLSAIEKAIQASDLGLNPTNDGNVVRLVFPSPTTEQRQKWVKKTKEIVEHGKIAVRNIRRDVIKELKEMTKNGEISEDDEKRLEKEVQNLTDKYIEELDKLFERKEKEIMEF.

This sequence belongs to the RRF family.

It is found in the cytoplasm. Responsible for the release of ribosomes from messenger RNA at the termination of protein biosynthesis. May increase the efficiency of translation by recycling ribosomes from one round of translation to another. The protein is Ribosome-recycling factor of Thermosipho africanus (strain TCF52B).